The primary structure comprises 345 residues: Heat-inducible transcription repressor HrcA (345 aa).

It belongs to the HrcA family.

In terms of biological role, negative regulator of class I heat shock genes (grpE-dnaK-dnaJ and groELS operons). Prevents heat-shock induction of these operons. In Corynebacterium diphtheriae (strain ATCC 700971 / NCTC 13129 / Biotype gravis), this protein is Heat-inducible transcription repressor HrcA.